The sequence spans 252 residues: Endonuclease NucS (252 aa).

Belongs to the NucS endonuclease family.

The protein localises to the cytoplasm. Cleaves both 3' and 5' ssDNA extremities of branched DNA structures. This chain is Endonuclease NucS, found in Sulfurisphaera tokodaii (strain DSM 16993 / JCM 10545 / NBRC 100140 / 7) (Sulfolobus tokodaii).